A 594-amino-acid polypeptide reads, in one-letter code: UvrABC system protein C (594 aa).

One can recognise a GIY-YIG domain in the interval 14–91; that stretch reads DQPGCYLMKD…IKKHDPKYNI (78 aa). The 36-residue stretch at 196 to 231 folds into the UVR domain; sequence KEVRSELETKMYEASEKLEFERAKELRDQIAHIDAI.

Belongs to the UvrC family. In terms of assembly, interacts with UvrB in an incision complex.

Its subcellular location is the cytoplasm. Its function is as follows. The UvrABC repair system catalyzes the recognition and processing of DNA lesions. UvrC both incises the 5' and 3' sides of the lesion. The N-terminal half is responsible for the 3' incision and the C-terminal half is responsible for the 5' incision. The chain is UvrABC system protein C from Bacillus cereus (strain AH187).